An 89-amino-acid polypeptide reads, in one-letter code: Small ribosomal subunit protein bS20 (89 aa).

A disordered region spans residues 1 to 25 (MANTPQSKKRARQLERRTAVNKARR).

It belongs to the bacterial ribosomal protein bS20 family.

In terms of biological role, binds directly to 16S ribosomal RNA. The chain is Small ribosomal subunit protein bS20 from Paracoccus denitrificans (strain Pd 1222).